The sequence spans 298 residues: NAD kinase (298 aa).

Aspartate 80 acts as the Proton acceptor in catalysis. NAD(+)-binding positions include 80 to 81, 154 to 155, arginine 182, aspartate 184, 195 to 200, alanine 219, and glutamine 253; these read DG, ND, and TAYALS.

The protein belongs to the NAD kinase family. Requires a divalent metal cation as cofactor.

The protein resides in the cytoplasm. It carries out the reaction NAD(+) + ATP = ADP + NADP(+) + H(+). Its function is as follows. Involved in the regulation of the intracellular balance of NAD and NADP, and is a key enzyme in the biosynthesis of NADP. Catalyzes specifically the phosphorylation on 2'-hydroxyl of the adenosine moiety of NAD to yield NADP. The chain is NAD kinase from Paracidovorax citrulli (strain AAC00-1) (Acidovorax citrulli).